The sequence spans 508 residues: MPSVGIVIGDGKKEYPGKLTLYVTVTCIVAAMGGLIFGYDIGISGGVTTMDSFQQKFFPSVYEKQKKDHDSNQYCRFDSVSLTLFTSSLYLAALCSSLVASYVTRQFGRKISMLLGGVLFCAGALLNGFATAVWMLIVGRLLLGFGIGFTNQSVPLYLSEMAPYKYRGALNIGFQLSITIGILVANVLNFFFSKISWGWRLSLGGAVVPALIITVGSLILPDTPNSMIERGQFRLAEAKLRKIRGVDDIDDEINDLIIASEASKLVEHPWRNLLQRKYRPHLTMAILIPAFQQLTGINVIMFYAPVLFQTIGFGSDAALISAVVTGLVNVGATVVSIYGVDKWGRRFLFLEGGFQMLISQVAVAAAIGAKFGVDGTPGVLPKWYAIVVVLFICIYVAAFAWSWGPLGWLVPSEIFPLEIRSAAQSITVSVNMIFTFLIAQVFLMMLCHLKFGLFIFFAFFVVVMSIFVYLFLPETRGVPIEEMNRVWRSHWYWSKFVDAEKNLTKVVI.

The Cytoplasmic segment spans residues 1–22 (MPSVGIVIGDGKKEYPGKLTLY). 12 helical membrane-spanning segments follow: residues 23 to 43 (VTVT…DIGI), 80 to 100 (VSLT…SLVA), 118 to 138 (VLFC…MLIV), 141 to 161 (LLLG…LSEM), 172 to 192 (IGFQ…NFFF), 201 to 221 (LSLG…LILP), 294 to 314 (LTGI…IGFG), 317 to 337 (AALI…VVSI), 347 to 367 (FLFL…AAAI), 383 to 403 (WYAI…AWSW), 426 to 446 (ITVS…LMML), and 451 to 471 (FGLF…VYLF). Residues 472-508 (LPETRGVPIEEMNRVWRSHWYWSKFVDAEKNLTKVVI) lie on the Cytoplasmic side of the membrane.

Belongs to the major facilitator superfamily. Sugar transporter (TC 2.A.1.1) family.

The protein resides in the membrane. In terms of biological role, mediates an active uptake of hexoses, probably by sugar/hydrogen symport. This Arabidopsis thaliana (Mouse-ear cress) protein is Sugar transport protein 12 (STP12).